The chain runs to 247 residues: DNA repair protein RecO (247 aa).

It belongs to the RecO family.

In terms of biological role, involved in DNA repair and RecF pathway recombination. This Brucella abortus (strain 2308) protein is DNA repair protein RecO.